The sequence spans 290 residues: GTPase Era (290 aa).

The Era-type G domain maps to 2-169 (KSGFAAILGR…KNKIYENFSE (168 aa)). Residues 10-17 (GRPSTGKS) are G1. 10–17 (GRPSTGKS) lines the GTP pocket. The tract at residues 36-40 (QTTRN) is G2. Residues 57–60 (DTPG) are G3. Residues 57 to 61 (DTPGF) and 119 to 122 (NKVD) each bind GTP. A G4 region spans residues 119 to 122 (NKVD). The tract at residues 148–150 (ISA) is G5. The KH type-2 domain occupies 200–276 (LKEELPYSLY…NLFLQVKLKK (77 aa)).

It belongs to the TRAFAC class TrmE-Era-EngA-EngB-Septin-like GTPase superfamily. Era GTPase family. Monomer.

The protein localises to the cytoplasm. Its subcellular location is the cell inner membrane. Its function is as follows. An essential GTPase that binds both GDP and GTP, with rapid nucleotide exchange. Plays a role in 16S rRNA processing and 30S ribosomal subunit biogenesis and possibly also in cell cycle regulation and energy metabolism. This is GTPase Era from Borreliella afzelii (strain PKo) (Borrelia afzelii).